Reading from the N-terminus, the 96-residue chain is Large ribosomal subunit protein uL23cz (96 aa).

It belongs to the universal ribosomal protein uL23 family. As to quaternary structure, part of the 50S ribosomal subunit.

The protein localises to the plastid. It localises to the chloroplast. Functionally, binds to 23S rRNA. The chain is Large ribosomal subunit protein uL23cz (rpl23-A) from Sorghum bicolor (Sorghum).